The sequence spans 256 residues: Biosynthetic peptidoglycan transglycosylase (256 aa).

Residues 26–48 (VARWLAYAGGVFAGAWLATQLYY) traverse the membrane as a helical segment.

Belongs to the glycosyltransferase 51 family.

The protein resides in the cell inner membrane. The enzyme catalyses [GlcNAc-(1-&gt;4)-Mur2Ac(oyl-L-Ala-gamma-D-Glu-L-Lys-D-Ala-D-Ala)](n)-di-trans,octa-cis-undecaprenyl diphosphate + beta-D-GlcNAc-(1-&gt;4)-Mur2Ac(oyl-L-Ala-gamma-D-Glu-L-Lys-D-Ala-D-Ala)-di-trans,octa-cis-undecaprenyl diphosphate = [GlcNAc-(1-&gt;4)-Mur2Ac(oyl-L-Ala-gamma-D-Glu-L-Lys-D-Ala-D-Ala)](n+1)-di-trans,octa-cis-undecaprenyl diphosphate + di-trans,octa-cis-undecaprenyl diphosphate + H(+). It functions in the pathway cell wall biogenesis; peptidoglycan biosynthesis. Peptidoglycan polymerase that catalyzes glycan chain elongation from lipid-linked precursors. The sequence is that of Biosynthetic peptidoglycan transglycosylase from Burkholderia thailandensis (strain ATCC 700388 / DSM 13276 / CCUG 48851 / CIP 106301 / E264).